A 264-amino-acid chain; its full sequence is ATP synthase subunit a (264 aa).

The next 6 membrane-spanning stretches (helical) occupy residues 29–49 (TWHI…LWIF), 87–107 (NALI…MNFM), 134–154 (DLNI…YYSI), 177–197 (IPVN…SLAL), 208–228 (LIFI…SLGV), and 235–255 (LIFH…LTIV).

It belongs to the ATPase A chain family. As to quaternary structure, F-type ATPases have 2 components, CF(1) - the catalytic core - and CF(0) - the membrane proton channel. CF(1) has five subunits: alpha(3), beta(3), gamma(1), delta(1), epsilon(1). CF(0) has three main subunits: a(1), b(2) and c(9-12). The alpha and beta chains form an alternating ring which encloses part of the gamma chain. CF(1) is attached to CF(0) by a central stalk formed by the gamma and epsilon chains, while a peripheral stalk is formed by the delta and b chains.

The protein resides in the cell inner membrane. Functionally, key component of the proton channel; it plays a direct role in the translocation of protons across the membrane. The polypeptide is ATP synthase subunit a (Shewanella amazonensis (strain ATCC BAA-1098 / SB2B)).